The chain runs to 69 residues: Sodium channel toxin (69 aa).

The 65-residue stretch at 2-66 (KNDYPVDTAK…SPTKTSGRCN (65 aa)) folds into the LCN-type CS-alpha/beta domain. Cystine bridges form between Cys-14-Cys-65, Cys-18-Cys-41, Cys-27-Cys-48, and Cys-31-Cys-50.

The protein belongs to the long (4 C-C) scorpion toxin superfamily. Sodium channel inhibitor family. Expressed by the venom gland.

Its subcellular location is the secreted. Its function is as follows. Inhibits voltage-gated sodium channels (Nav). The protein is Sodium channel toxin of Tityus metuendus (Scorpion).